The following is a 690-amino-acid chain: DNA ligase (690 aa).

NAD(+)-binding positions include 43 to 47 (DAEYD), 92 to 93 (SI), and glutamate 129. Lysine 131 acts as the N6-AMP-lysine intermediate in catalysis. Residues arginine 152, glutamate 188, lysine 309, and lysine 333 each contribute to the NAD(+) site. Zn(2+)-binding residues include cysteine 427, cysteine 430, cysteine 445, and cysteine 451. The region spanning 610 to 690 (VTPTPLSGKT…GLKELLDGHS (81 aa)) is the BRCT domain.

The protein belongs to the NAD-dependent DNA ligase family. LigA subfamily. It depends on Mg(2+) as a cofactor. Requires Mn(2+) as cofactor.

The enzyme catalyses NAD(+) + (deoxyribonucleotide)n-3'-hydroxyl + 5'-phospho-(deoxyribonucleotide)m = (deoxyribonucleotide)n+m + AMP + beta-nicotinamide D-nucleotide.. In terms of biological role, DNA ligase that catalyzes the formation of phosphodiester linkages between 5'-phosphoryl and 3'-hydroxyl groups in double-stranded DNA using NAD as a coenzyme and as the energy source for the reaction. It is essential for DNA replication and repair of damaged DNA. In Albidiferax ferrireducens (strain ATCC BAA-621 / DSM 15236 / T118) (Rhodoferax ferrireducens), this protein is DNA ligase.